Consider the following 495-residue polypeptide: Myocyte-specific enhancer factor 2A (495 aa).

Residues 3-57 enclose the MADS-box domain; sequence RKKIQITRIMDERNRQVTFTKRKFGLMKKAYELSVLCDCEIALIIFNSSNKLFQY. Residues 58–86 constitute a DNA-binding region (mef2-type); sequence ASTDMDKVLLKYTEYNEPHESRTNSDIVE. A Phosphoserine; by CK2 modification is found at serine 59. A Phosphoserine modification is found at serine 98. The tract at residues 175 to 225 is disordered; sequence AESSMLSPPPATLHRNVSPGAPQRPPSTGSAGGMLSTTDLTVPNGAGNGPV. Serine 235 is modified (phosphoserine). A disordered region spans residues 242–271; that stretch reads TGANSVGKVMPTKSPPPPGGGSVGMNSRKP. At lysine 249 the chain carries N6-acetyllysine. The residue at position 255 (serine 255) is a Phosphoserine. Residues 266-283 form a required for interaction with MAPKs region; it reads MNSRKPDLRVVIPPSSKG. 2 positions are modified to phosphothreonine; by MAPK7 and MAPK14: threonine 304 and threonine 311. Residue serine 347 is modified to Phosphoserine; by MAPK7. Polar residues predominate over residues 382–394; the sequence is SNLSINTNQNINI. A disordered region spans residues 382–495; sequence SNLSINTNQN…KRMRMDTWVT (114 aa). At lysine 395 the chain carries N6-acetyllysine; alternate. Lysine 395 is covalently cross-linked (Glycyl lysine isopeptide (Lys-Gly) (interchain with G-Cter in SUMO); alternate). Serine 400 is modified (phosphoserine; by CDK5). A Phosphothreonine modification is found at threonine 407. A compositionally biased stretch (pro residues) spans 421–433; the sequence is QQPPPQPPQPQPQ. Serine 441 carries the post-translational modification Phosphoserine. A compositionally biased stretch (low complexity) spans 441-454; that stretch reads SPVDSLSSSSSSYD. Composition is skewed to basic and acidic residues over residues 455-465 and 476-495; these read GSDREDPRGDF and NAED…TWVT.

Binds DNA as a homo- or heterodimer. Dimerizes with MEF2D. Interacts with HDAC7. Interacts with PIAS1; the interaction enhances sumoylation. Interacts with HDAC4, HDAC9 and SLC2A4RG. Interacts (via the N-terminal) with MAPK7; the interaction results in the phosphorylation and transcriptional activity of MEF2A. Post-translationally, constitutive phosphorylation on Ser-400 promotes Lys-395 sumoylation thus preventing acetylation at this site. Dephosphorylation on Ser-400 by PPP3CA upon neuron depolarization promotes a switch from sumoylation to acetylation on residue Lys-395 leading to inhibition of dendrite claw differentiation. Phosphorylation on Thr-304 and Thr-311 are the main sites involved in p38 MAPK signaling and activate transcription. Phosphorylated on these sites by MAPK14/p38alpha and MAPK11/p38beta, but not by MAPK13/p38delta nor by MAPK12/p38gamma. Phosphorylation on Ser-400 by CDK5 induced by neurotoxicity inhibits MEF2A transcriptional activation leading to apoptosis of cortical neurons. Phosphorylation on Thr-304, Thr-311 and Ser-347 can be induced by EGF. In terms of processing, sumoylation on Lys-395 is enhanced by PIAS1 and represses transcriptional activity. Phosphorylation on Ser-400 is required for sumoylation. Has no effect on nuclear location nor on DNA binding. Sumoylated with SUMO1 and, to a lesser extent with SUMO2 and SUMO3. PIASx facilitates sumoylation in postsynaptic dendrites in the cerebellar cortex and promotes their morphogenesis. Acetylation on Lys-395 activates transcriptional activity. Acetylated by p300 on several sites in diffentiating myocytes. Acetylation on Lys-4 increases DNA binding and transactivation. Hyperacetylation by p300 leads to enhanced cardiac myocyte growth and heart failure. Post-translationally, proteolytically cleaved in cerebellar granule neurons on several sites by caspase 3 and caspase 7 following neurotoxicity. Preferentially cleaves the CDK5-mediated hyperphosphorylated form which leads to neuron apoptosis and transcriptional inactivation.

The protein resides in the nucleus. Functionally, transcriptional activator which binds specifically to the MEF2 element, 5'-YTA[AT](4)TAR-3', found in numerous muscle-specific genes. Also involved in the activation of numerous growth factor- and stress-induced genes. Mediates cellular functions not only in skeletal and cardiac muscle development, but also in neuronal differentiation and survival. Plays diverse roles in the control of cell growth, survival and apoptosis via p38 MAPK signaling in muscle-specific and/or growth factor-related transcription. In cerebellar granule neurons, phosphorylated and sumoylated MEF2A represses transcription of NUR77 promoting synaptic differentiation. Associates with chromatin to the ZNF16 promoter. The sequence is that of Myocyte-specific enhancer factor 2A (Mef2a) from Rattus norvegicus (Rat).